The sequence spans 739 residues: Nucleoprotein (739 aa).

The stretch at 334-363 (VNVGEQYQQLREAATEAEKQLQQYAESREL) forms a coiled coil. The segment at 415–646 (PKTSGHYDDD…QDSDNTQPEH (232 aa)) is disordered. Composition is skewed to low complexity over residues 449-458 (SQDTTIPDVV) and 504-514 (KGGQQKNSQKG). Residues 520–530 (RQTQSRPTQNI) show a composition bias toward polar residues. Residues 567–579 (EEADPLDDADDET) are compositionally biased toward acidic residues. The segment covering 611–638 (YRDHSEKKELPQDERQDQDHTQEARNQD) has biased composition (basic and acidic residues).

Belongs to the filoviruses nucleoprotein family. As to quaternary structure, homooligomer. Homomultimerizes to form the nucleocapsid. Binds to viral genomic RNA. Interacts with VP35 and VP30 to form the nucleocapsid. Interacts with host PPP2R5C; this interaction leads to VP30 dephosphorylation and viral transcription. Interacts with VP24; this interaction facilitates nucleocapsid assembly and genome packaging. Interacts with matrix protein VP40; this interaction allows recruitment of the nucleocapsid into progeny virions. Interacts with host STAU1. Interacts with host NXF1 (via RNA-binding domain); this interaction recruits NXF1 to the inclusion bodies were viral replication takes place, probably to export viral mRNA-NXF1 complexes from these sites. Interacts with host CCDC92; this interaction sequesters NP in the host cytoplasm. Interacts with host TRIM14. In terms of processing, phosphorylated and O-glycosylated by host. Acetylated by host EP300 in vitro.

It is found in the virion. The protein localises to the host cytoplasm. Functionally, oligomerizes into helical capsid to encapsidate the viral genome, protecting it from nucleases and the cellular innate immune response. VP35 binds to and stabilizes monomeric NP, keeping it soluble. Upon virus replication, NP is recruited to bind cooperatively viral genomic RNA and VP35 is released. The encapsidated genomic RNA is termed the nucleocapsid and serves as template for transcription and replication. The nucleocapsid is helical with a pitch of 10.81 NP per turn and a diameter of about 22nm. Each NP binds to six nucleotides of viral genomic RNA, three being exposed to the solvant and three hidden into the nucleocapsid. Also recruits host PPP2R5C phosphatase to dephosphorylate VP30 and thereby promote viral transcription. Upon virion assembly and budding, NP binds to VP24 and possibly host STAU1. The protein is Nucleoprotein (NP) of Zaire ebolavirus (strain Gabon-94) (ZEBOV).